The primary structure comprises 347 residues: 5-deoxyribose 1-phosphate isomerase (347 aa).

Substrate is bound by residues 48 to 50 (RGA), Arg-91, and Gln-198. Asp-239 acts as the Proton donor in catalysis. 249-250 (NK) lines the substrate pocket.

Belongs to the EIF-2B alpha/beta/delta subunits family. DrdI subfamily.

The enzyme catalyses 5-deoxy-alpha-D-ribose 1-phosphate = 5-deoxy-D-ribulose 1-phosphate. It participates in carbohydrate degradation. Catalyzes the isomerization of 5-deoxy-alpha-D-ribose 1-phosphate to 5-deoxy-D-ribulose 1-phosphate, as part of a 5-deoxyribose salvage pathway that recycles this toxic radical SAM enzyme by-product to mainstream metabolites. In Bacillus thuringiensis subsp. konkukian (strain 97-27), this protein is 5-deoxyribose 1-phosphate isomerase.